The primary structure comprises 166 residues: Probable tyrosine-protein phosphatase DG1060 (166 aa).

The region spanning 9–162 (NFGMVADDLY…LVTYNNAPQW (154 aa)) is the Tyrosine-protein phosphatase domain. Cys101 serves as the catalytic Phosphocysteine intermediate.

It belongs to the protein-tyrosine phosphatase family.

Its subcellular location is the cytoplasm. The catalysed reaction is O-phospho-L-tyrosyl-[protein] + H2O = L-tyrosyl-[protein] + phosphate. This Dictyostelium discoideum (Social amoeba) protein is Probable tyrosine-protein phosphatase DG1060 (DG1060).